The following is a 189-amino-acid chain: Interferon alpha-13 (189 aa).

Positions 1 to 23 are cleaved as a signal peptide; it reads MARPCAFLMVLVVLSYWSACSLG. 2 disulfides stabilise this stretch: Cys-24–Cys-122 and Cys-52–Cys-162. Asn-94 and Asn-101 each carry an N-linked (GlcNAc...) asparagine glycan.

Belongs to the alpha/beta interferon family.

It is found in the secreted. Functionally, exhibits antiviral activity against Theiler's virus, Mengo virus and vesicular stomatitis virus. Interferons alpha stimulate the production of two enzymes: a protein kinase and an oligoadenylate synthetase. The chain is Interferon alpha-13 (Ifna13) from Mus musculus (Mouse).